The primary structure comprises 431 residues: Gamma-glutamyl phosphate reductase (431 aa).

The protein belongs to the gamma-glutamyl phosphate reductase family.

The protein resides in the cytoplasm. It carries out the reaction L-glutamate 5-semialdehyde + phosphate + NADP(+) = L-glutamyl 5-phosphate + NADPH + H(+). Its pathway is amino-acid biosynthesis; L-proline biosynthesis; L-glutamate 5-semialdehyde from L-glutamate: step 2/2. In terms of biological role, catalyzes the NADPH-dependent reduction of L-glutamate 5-phosphate into L-glutamate 5-semialdehyde and phosphate. The product spontaneously undergoes cyclization to form 1-pyrroline-5-carboxylate. The protein is Gamma-glutamyl phosphate reductase of Methylobacterium nodulans (strain LMG 21967 / CNCM I-2342 / ORS 2060).